The chain runs to 316 residues: Olfactory receptor 51J1 (316 aa).

Topologically, residues 1-31 are extracellular; that stretch reads MKISNNSLGFLPTTFILVGIPGLESEHLWIS. N-linked (GlcNAc...) asparagine glycosylation is present at N5. A helical transmembrane segment spans residues 32 to 52; that stretch reads VPFSLIYIIIFLGNGIILHVI. Over 53-63 the chain is Cytoplasmic; it reads RTDIALHQPMY. Residues 64–84 traverse the membrane as a helical segment; the sequence is LFLAMLALAEVRVSASTLPTV. Topologically, residues 85–104 are extracellular; that stretch reads LGIFLFGNTEISLEACLFPD. C100 and C191 are joined by a disulfide. Residues 105–125 traverse the membrane as a helical segment; that stretch reads VLHPFFIHDGASCAAGHVFGP. Residues 126–161 lie on the Cytoplasmic side of the membrane; that stretch reads LYSHLQPTELHSYPDTAQGLWHRSYYRTEKHYAHGS. Residues 162–182 form a helical membrane-spanning segment; that stretch reads VAHSLMASALLWPQCPLTFLL. The Extracellular portion of the chain corresponds to 183-191; it reads SAPQSYLSC. The helical transmembrane segment at 192-212 threads the bilayer; the sequence is GNISVNNIYGIFIVTSTFGLD. Over 213–242 the chain is Cytoplasmic; it reads SLLIVISYGLILHTVLGIATGEGRKKALNT. Residues 243 to 263 form a helical membrane-spanning segment; that stretch reads CGSHVCAVLAYYVPMIGLSIV. Topologically, residues 264-275 are extracellular; sequence HRLGHRVSPLLQ. A helical membrane pass occupies residues 276–296; the sequence is AMMANAYLFFPPVVNPIVYSI. Residues 297–316 lie on the Cytoplasmic side of the membrane; the sequence is KTKEIHGAIVRMLLEKRRRV.

It belongs to the G-protein coupled receptor 1 family.

Its subcellular location is the cell membrane. In terms of biological role, odorant receptor. The chain is Olfactory receptor 51J1 (OR51J1) from Homo sapiens (Human).